The chain runs to 248 residues: Probable capsular polysaccharide biosynthesis protein YwqC (248 aa).

A run of 2 helical transmembrane segments spans residues 18–38 (ILLIMIVTAAATAAGGLISFF) and 174–194 (LLNIAIAFAAGLAGSIGLAFL).

The protein belongs to the CpsC/CapA family. Post-translationally, not phosphorylated in vitro by YwqD.

Its subcellular location is the cell membrane. It participates in capsule biogenesis; capsule polysaccharide biosynthesis. Required for YwqD kinase activity. May bring YwqD and its substrates into contact. Probably involved in the regulation of capsular polysaccharide biosynthesis. This Bacillus subtilis (strain 168) protein is Probable capsular polysaccharide biosynthesis protein YwqC (ywqC).